We begin with the raw amino-acid sequence, 91 residues long: MEARDVLKRPVITEKSSAAMAEDKYTFDVDTRANKTQVKIAVEEIFDVKVDNVNIINYKPKKKRMGRYQGYTNKKRVAIVKLKEGSIDLFN.

The protein belongs to the universal ribosomal protein uL23 family. Part of the 50S ribosomal subunit. Contacts protein L29, and trigger factor when it is bound to the ribosome.

Functionally, one of the early assembly proteins it binds 23S rRNA. One of the proteins that surrounds the polypeptide exit tunnel on the outside of the ribosome. Forms the main docking site for trigger factor binding to the ribosome. In Staphylococcus saprophyticus subsp. saprophyticus (strain ATCC 15305 / DSM 20229 / NCIMB 8711 / NCTC 7292 / S-41), this protein is Large ribosomal subunit protein uL23.